An 845-amino-acid polypeptide reads, in one-letter code: Beta-mannosidase B (845 aa).

Residue Asn-252 is glycosylated (N-linked (GlcNAc...) asparagine). Glu-432 acts as the Proton donor in catalysis. Asn-717 and Asn-723 each carry an N-linked (GlcNAc...) asparagine glycan.

The protein belongs to the glycosyl hydrolase 2 family. Beta-mannosidase B subfamily.

The enzyme catalyses Hydrolysis of terminal, non-reducing beta-D-mannose residues in beta-D-mannosides.. Its pathway is glycan metabolism; N-glycan degradation. Exoglycosidase that cleaves the single beta-linked mannose residue from the non-reducing end of beta-mannosidic oligosaccharides of various complexity and length. Prefers mannobiose over mannotriose and has no activity against polymeric mannan. Is also severely restricted by galactosyl substitutions at the +1 subsite. This is Beta-mannosidase B (mndB) from Aspergillus fumigatus (strain ATCC MYA-4609 / CBS 101355 / FGSC A1100 / Af293) (Neosartorya fumigata).